The chain runs to 325 residues: LIM and senescent cell antigen-like-containing domain protein 1 (325 aa).

Residue alanine 2 is modified to N-acetylalanine. LIM zinc-binding domains lie at 10-62, 71-121, 135-184, 193-243, and 252-303; these read CERC…CEHD, CHQC…CRPC, CQKC…CLPC, CGAC…CETH, and CFHC…CKKC.

In terms of assembly, component of the heterotrimeric IPP (ILK-PINCH-PARVIN) complex composed of ILK, LIMS1/PINCH and PARVA; the complex binds to F-actin via the C-terminal tail of LIMS1 and the N-terminal region of PARVA, promoting F-actin filament bundling. Formation of the IPP complex is dependent on protein kinase C and precedes integrin-mediated cell adhesion and spreading. Competes with LIMS2 for interaction with ILK. Interacts with SH3/SH2 adapter NCK2, thereby linking the complex to cell surface receptors. Interacts (via LIM zinc-binding 5) with TGFB1I1.

It localises to the cell junction. The protein resides in the focal adhesion. Its subcellular location is the cell membrane. Its function is as follows. Within the IPP (ILK-PINCH-PARVIN) complex, binds to F-actin, promoting F-actin bundling, a process required to generate force for actin cytoskeleton reorganization and subsequent dynamic cell adhesion events such as cell spreading and migration. The polypeptide is LIM and senescent cell antigen-like-containing domain protein 1 (Lims1) (Mus musculus (Mouse)).